Here is a 697-residue protein sequence, read N- to C-terminus: MTEQIKKTFLKAKEENKNVLVTFVTCGFPNVDETIKIMQGLQNGGAGIIELGIPFSDAVADGPTICKGNEIALKNNITLEKVFETVKLARDAGVTIPIILMGYYNPIFSYGDAKTIQKAKEVGANGFIIVDLPPEEAVGFREECKKQGVSFVPLVAPSTTDRRMELLASVADSFIYVVSRMGSTGSSATGVINTALPQLCQRVRKFAGDTPLAVGFGVNTSEHFHQVGSVSDGVVVGSKIIDLILKAEPGTAATVVEEYCKYLTKEDPSAPVPKQFQSGGSVATAPPAAVVEPINEMYLPQKYGMFGGMYVPEALTQCLVELESVFYKALHDEKFWEEFRSYYEYMGRPSALDYAKRLTEYCGGAHIWLKREDLNHGGSHKINNCIGQILLAKRLGKNRIIAETGAGQHGVATAICAAKFGMKCTIYMGAEDCRRQALNVFRIRLLGAEVVPVTSGTQTLRDAVNEALKAWVEQIDTTHYLIGSAIGPHPFPTIVKTFQSVIGEETKAQMQEKRKKLPDAVVACVGGGSNSIGMFSPFKADKSVMMLGCEAGGDGVDTPKHSATLTMGKVGVFHGVRTYVLQREDGQIQDTHSISAGLDYPGVGPELSELKYTNRAEFIAVTDAQCLEGFRALCHLEGIIPALESSHAVYGGMELAKKLPKDKDIVITISGRGDKDVQSVAEQLPILGPKIGWDLRF.

The segment at 1–298 (MTEQIKKTFL…AVVEPINEMY (298 aa)) is tryptophan synthase alpha chain. Residues E50 and D61 each act as proton acceptor in the active site. A tryptophan synthase beta chain region spans residues 298 to 697 (YLPQKYGMFG…GPKIGWDLRF (400 aa)). N6-(pyridoxal phosphate)lysine is present on K381.

This sequence in the N-terminal section; belongs to the TrpA family. It in the C-terminal section; belongs to the TrpB family. The cofactor is pyridoxal 5'-phosphate.

It catalyses the reaction (1S,2R)-1-C-(indol-3-yl)glycerol 3-phosphate + L-serine = D-glyceraldehyde 3-phosphate + L-tryptophan + H2O. It participates in amino-acid biosynthesis; L-tryptophan biosynthesis; L-tryptophan from chorismate: step 5/5. The polypeptide is Tryptophan synthase (trp2) (Schizosaccharomyces pombe (strain 972 / ATCC 24843) (Fission yeast)).